The sequence spans 117 residues: Neurotoxic enhancer CSTX-13 (117 aa).

An N-terminal signal peptide occupies residues 1-20 (MKVLVIFAVLSLVIFSNCSA). Residues 21–47 (ETDEDFFGEESFEADDIIPFIAKEQVR) constitute a propeptide that is removed on maturation. 4 disulfide bridges follow: C50/C65, C57/C74, C64/C95, and C76/C93. A propeptide spanning residues 82-87 (RSETAR) is cleaved from the precursor. A Threonine amide modification is found at T116.

The protein belongs to the neurotoxin 19 (CSTX) family. 12 subfamily. As to quaternary structure, heterodimer of A and B chains; disulfide-linked. Interacts with CSTX-1 (AC P81694) (Kd=430 nM), and with CSTX-9 (AC P58604) (Kd=370 nM). Expressed by the venom gland.

The protein resides in the secreted. The protein localises to the target cell membrane. In terms of biological role, synergistic toxin that induces or increases a cytolytic effect when combined with CSTX-1 (AC P81694) or CSTX-9 (AC P58604). When alone, has a weak insecticidal activity, with an unknown molecular target. The chain is Neurotoxic enhancer CSTX-13 from Cupiennius salei (American wandering spider).